We begin with the raw amino-acid sequence, 228 residues long: Urease accessory protein UreH (228 aa).

The next 5 helical transmembrane spans lie at 48–68 (VFWG…IILM), 79–99 (SLEF…ILSL), 130–150 (LFIG…LTMS), 162–182 (ILFF…LIGI), and 196–216 (AFIQ…MYNL).

It belongs to the NiCoT transporter (TC 2.A.52) family.

The protein localises to the cell membrane. Probably facilitates nickel incorporation. May constitute a multicomponent high-affinity nickel transporter. Not essential for the expression of catalytically active urease. This is Urease accessory protein UreH (ureH) from Bacillus sp. (strain TB-90).